We begin with the raw amino-acid sequence, 84 residues long: Alpha-mammal toxin Aah3 (84 aa).

Residues 1–19 (MNYLVMISLALLLMTGVES) form the signal peptide. The 62-residue stretch at 21–82 (RDGYIVDSKN…PIKDPSYKCH (62 aa)) folds into the LCN-type CS-alpha/beta domain. Intrachain disulfides connect Cys31-Cys81, Cys35-Cys53, Cys39-Cys63, and Cys43-Cys65. A propeptide (removed by a carboxypeptidase) is located at residue Arg84.

The protein belongs to the long (4 C-C) scorpion toxin superfamily. Sodium channel inhibitor family. Alpha subfamily. As to expression, expressed by the venom gland.

It localises to the secreted. Its function is as follows. Alpha toxins bind voltage-independently at site-3 of sodium channels (Nav) and inhibit the inactivation of the activated channels, thereby blocking neuronal transmission. This Androctonus australis (Sahara scorpion) protein is Alpha-mammal toxin Aah3.